Reading from the N-terminus, the 227-residue chain is Cytochrome c oxidase subunit 2 (227 aa).

The Mitochondrial intermembrane segment spans residues 1 to 14 (MAHPVQLGLQDATS). A helical transmembrane segment spans residues 15 to 45 (PVMEELITFHDHALMAMSLISLLVLYALFST). Residues 46–59 (LTTKLTNTNITDAQ) lie on the Mitochondrial matrix side of the membrane. Residues 60-87 (EMEIIWTILPAIILVLIALPSLRILYLT) form a helical membrane-spanning segment. Residues 88–227 (DEVNNPSFTI…IFEMGPVFTL (140 aa)) are Mitochondrial intermembrane-facing. Residues H161, C196, E198, C200, H204, and M207 each contribute to the Cu cation site. E198 is a Mg(2+) binding site.

It belongs to the cytochrome c oxidase subunit 2 family. Component of the cytochrome c oxidase (complex IV, CIV), a multisubunit enzyme composed of 14 subunits. The complex is composed of a catalytic core of 3 subunits MT-CO1, MT-CO2 and MT-CO3, encoded in the mitochondrial DNA, and 11 supernumerary subunits COX4I, COX5A, COX5B, COX6A, COX6B, COX6C, COX7A, COX7B, COX7C, COX8 and NDUFA4, which are encoded in the nuclear genome. The complex exists as a monomer or a dimer and forms supercomplexes (SCs) in the inner mitochondrial membrane with NADH-ubiquinone oxidoreductase (complex I, CI) and ubiquinol-cytochrome c oxidoreductase (cytochrome b-c1 complex, complex III, CIII), resulting in different assemblies (supercomplex SCI(1)III(2)IV(1) and megacomplex MCI(2)III(2)IV(2)). Found in a complex with TMEM177, COA6, COX18, COX20, SCO1 and SCO2. Interacts with TMEM177 in a COX20-dependent manner. Interacts with COX20. Interacts with COX16. It depends on Cu cation as a cofactor.

It is found in the mitochondrion inner membrane. It catalyses the reaction 4 Fe(II)-[cytochrome c] + O2 + 8 H(+)(in) = 4 Fe(III)-[cytochrome c] + 2 H2O + 4 H(+)(out). Its function is as follows. Component of the cytochrome c oxidase, the last enzyme in the mitochondrial electron transport chain which drives oxidative phosphorylation. The respiratory chain contains 3 multisubunit complexes succinate dehydrogenase (complex II, CII), ubiquinol-cytochrome c oxidoreductase (cytochrome b-c1 complex, complex III, CIII) and cytochrome c oxidase (complex IV, CIV), that cooperate to transfer electrons derived from NADH and succinate to molecular oxygen, creating an electrochemical gradient over the inner membrane that drives transmembrane transport and the ATP synthase. Cytochrome c oxidase is the component of the respiratory chain that catalyzes the reduction of oxygen to water. Electrons originating from reduced cytochrome c in the intermembrane space (IMS) are transferred via the dinuclear copper A center (CU(A)) of subunit 2 and heme A of subunit 1 to the active site in subunit 1, a binuclear center (BNC) formed by heme A3 and copper B (CU(B)). The BNC reduces molecular oxygen to 2 water molecules using 4 electrons from cytochrome c in the IMS and 4 protons from the mitochondrial matrix. This is Cytochrome c oxidase subunit 2 (MT-CO2) from Cercocebus galeritus (Tana river mangabey).